Reading from the N-terminus, the 347-residue chain is High mobility group protein 20A (347 aa).

Polar residues-rich tracts occupy residues 1–10 and 40–49; these read MENLMTSSTL and SGATSSTNNP. Disordered stretches follow at residues 1–113 and 179–211; these read MENL…YVRF and FSRK…TEVK. The span at 55–66 shows a compositional bias: low complexity; it reads LSQGQLLQSESS. The segment covering 72-82 has biased composition (basic and acidic residues); the sequence is NEQRHEDEQRS. Residues 83–96 are compositionally biased toward basic residues; the sequence is KRGGWSKGRKRKKP. Residues 103-171 constitute a DNA-binding region (HMG box); it reads PKSPLTGYVR…RYMKELEQYQ (69 aa). Ser105 carries the post-translational modification Phosphoserine. Residues 182–211 are compositionally biased toward basic and acidic residues; it reads KTQDRQKGKSHRQDAARQATHDHEKETEVK. Positions 229 to 273 form a coiled coil; it reads SKAREAELRQLRKSNMEFEERNAALQKHVESMRTAVEKLEVDVIQ.

In terms of assembly, interacts with DTNB. Ubiquitous.

It is found in the nucleus. Plays a role in neuronal differentiation as chromatin-associated protein. Acts as inhibitor of HMG20B. Overcomes the repressive effects of the neuronal silencer REST and induces the activation of neuronal-specific genes. Involved in the recruitment of the histone methyltransferase KMT2A/MLL1 and consequent increased methylation of histone H3 lysine 4. The sequence is that of High mobility group protein 20A (HMG20A) from Homo sapiens (Human).